A 430-amino-acid chain; its full sequence is Mannosylglucosylglycerate synthase (430 aa).

It belongs to the glycosyltransferase group 1 family. A divalent metal cation is required as a cofactor.

It carries out the reaction (2R)-2-O-(alpha-D-glucopyranosyl)-glycerate + GDP-alpha-D-mannose = (2R)-2-O-[alpha-D-mannopyranosyl-(1-&gt;2)-alpha-D-glucopyranosyl]-glycerate + GDP + H(+). Functionally, involved in the biosynthesis of the compatible solute mannosylglucosylglycerate through a nonphosphorylating pathway. Catalyzes the synthesis of mannosylglucosylglycerate (MGG) from glucosylglycerate (GG) and GDP-mannose. This chain is Mannosylglucosylglycerate synthase, found in Petrotoga mobilis (strain DSM 10674 / SJ95).